The chain runs to 1401 residues: MKSCGVSLATAAAAAAAFGDEEKKMAAGKASGESEEASPSLTAEEREALGGLDSRLFGFVRFHEDGARTKALLGKAVRCYESLILKAEGKVESDFFCQLGHFNLLLEDYPKALSAYQRYYSLQSDYWKNAAFLYGLGLVYFHYNAFQWAIKAFQEVLYVDPSFCRAKEIHLRLGLMFKVNTDYESSLKHFQLALVDCNPCTLSNAEIQFHIAHLYETQRKYHSAKEAYEQLLQTENLSAQVKATVLQQLGWMHHTVDLLGDKATKESYAIQYLQKSLEADPNSGQSWYFLGRCYSSIGKVQDAFISYRQSIDKSEASADTWCSIGVLYQQQNQPMDALQAYICAVQLDHGHAAAWMDLGTLYESCNQPQDAIKCYLNATRSKSCSNTSALAARIKYLQAQLCNLPQGSLQNKTKLLPSIEEAWSLPIPAELTSRQGAMNTAQQNTSDNWSGGHAVSHPPVQQQAHSWCLTPQKLQHLEQLRANRNNLNPAQKLMLEQLESQFVLMQQHQMRPTGVAQVRSTGIPNGPTADSSLPTNSVSGQQPQLALTRVPSVSQPGVRPACPGQPLANGPFSAGHVPCSTSRTLGSTDTILIGNNHITGSGSNGNVPYLQRNALTLPHNRTNLTSSAEEPWKNQLSNSTQGLHKGQSSHSAGPNGERPLSSTGPSQHLQAAGSGIQNQNGHPTLPSNSVTQGAALNHLSSHTATSGGQQGITLTKESKPSGNILTVPETSRHTGETPNSTASVEGLPNHVHQMTADAVCSPSHGDSKSPGLLSSDNPQLSALLMGKANNNVGTGTCDKVNNIHPAVHTKTDNSVASSPSSAISTATPSPKSTEQTTTNSVTSLNSPHSGLHTINGEGMEESQSPMKTDLLLVNHKPSPQIIPSMSVSIYPSSAEVLKACRNLGKNGLSNSSILLDKCPPPRPPSSPYPPLPKDKLNPPTPSIYLENKRDAFFPPLHQFCTNPNNPVTVIRGLAGALKLDLGLFSTKTLVEANNEHMVEVRTQLLQPADENWDPTGTKKIWHCESNRSHTTIAKYAQYQASSFQESLREENEKRSHHKDHSDSESTSSDNSGRRRKGPFKTIKFGTNIDLSDDKKWKLQLHELTKLPAFVRVVSAGNLLSHVGHTILGMNTVQLYMKVPGSRTPGHQENNNFCSVNINIGPGDCEWFVVPEGYWGVLNDFCEKNNLNFLMGSWWPNLEDLYEANVPVYRFIQRPGDLVWINAGTVHWVQAIGWCNNIAWNVGPLTACQYKLAVERYEWNKLQSVKSIVPMVHLSWNMARNIKVSDPKLFEMIKYCLLRTLKQCQTLREALIAAGKEIIWHGRTKEEPAHYCSICEVEVFDLLFVTNESNSRKTYIVHCQDCARKTSGNLENFVVLEQYKMEDLMQVYDQFTLAPPLPSASS.

The interval 1 to 1095 is interaction with SUPT6H; that stretch reads MKSCGVSLAT…TNIDLSDDKK (1095 aa). TPR repeat units lie at residues 93-126, 130-163, 170-199, 205-238, 250-283, 284-317, 318-351, and 352-385; these read SDFF…QSDY, AAFL…DPSF, HLRL…DCNP, AEIQ…ENLS, GWMH…DPNS, GQSW…SEAS, ADTW…DHGH, and AAAW…KSCS. Polar residues predominate over residues 437-449; it reads AMNTAQQNTSDNW. Residues 437–457 form a disordered region; the sequence is AMNTAQQNTSDNWSGGHAVSH. R519 carries the post-translational modification Omega-N-methylarginine. Positions 521-541 are disordered; it reads TGIPNGPTADSSLPTNSVSGQ. Residue R549 is modified to Omega-N-methylarginine. Polar residues-rich tracts occupy residues 624–652 and 660–724; these read LTSS…SHSA and LSST…SGNI. Disordered regions lie at residues 624–746, 758–778, 810–864, 914–940, and 1043–1079; these read LTSS…SVEG, AVCS…SDNP, KTDN…ESQS, LLDK…NPPT, and FQES…KGPF. Position 769 is a phosphoserine (S769). Over residues 814-833 the composition is skewed to low complexity; sequence SVASSPSSAISTATPSPKST. T827 carries the phosphothreonine modification. S829 bears the Phosphoserine mark. Polar residues predominate over residues 834-848; the sequence is EQTTTNSVTSLNSPH. Pro residues predominate over residues 918–931; that stretch reads CPPPRPPSSPYPPL. Residues 1046-1063 show a composition bias toward basic and acidic residues; sequence SLREENEKRSHHKDHSDS. In terms of domain architecture, JmjC spans 1095–1258; the sequence is KWKLQLHELT…YKLAVERYEW (164 aa). The Fe cation site is built by H1146, E1148, and H1226. The Zn(2+) site is built by C1331, C1334, C1358, and C1361.

It belongs to the UTX family. As to quaternary structure, interacts with TLE1. Component of the MLL2/3 complex (also named ASCOM complex), at least composed of KMT2D/MLL2 or KMT2C/MLL3, ASH2L, RBBP5, WDR5, NCOA6, DPY30, KDM6A (or KDM6B), PAXIP1/PTIP, PAGR1 and alpha- and beta-tubulin. Interacts with SUPT6H. Interacts with SMARCA4. Interacts with PROSER1. The cofactor is L-ascorbate. Requires Fe(2+) as cofactor.

Its subcellular location is the nucleus. The enzyme catalyses N(6),N(6),N(6)-trimethyl-L-lysyl(27)-[histone H3] + 2 2-oxoglutarate + 2 O2 = N(6)-methyl-L-lysyl(27)-[histone H3] + 2 formaldehyde + 2 succinate + 2 CO2. Histone demethylase that specifically demethylates 'Lys-27' of histone H3, thereby playing a central role in histone code. Demethylates trimethylated and dimethylated but not monomethylated H3 'Lys-27'. Plays a central role in regulation of posterior development, by regulating HOX gene expression. Demethylation of 'Lys-27' of histone H3 is concomitant with methylation of 'Lys-4' of histone H3, and regulates the recruitment of the PRC1 complex and monoubiquitination of histone H2A. Plays a demethylase-independent role in chromatin remodeling to regulate T-box family member-dependent gene expression. In Homo sapiens (Human), this protein is Lysine-specific demethylase 6A (KDM6A).